A 251-amino-acid polypeptide reads, in one-letter code: 5'-nucleotidase SurE (251 aa).

A divalent metal cation contacts are provided by D8, D9, S39, and N91.

It belongs to the SurE nucleotidase family. A divalent metal cation serves as cofactor.

Its subcellular location is the cytoplasm. The catalysed reaction is a ribonucleoside 5'-phosphate + H2O = a ribonucleoside + phosphate. Nucleotidase that shows phosphatase activity on nucleoside 5'-monophosphates. This is 5'-nucleotidase SurE from Nitrosococcus oceani (strain ATCC 19707 / BCRC 17464 / JCM 30415 / NCIMB 11848 / C-107).